The primary structure comprises 478 residues: RNA-binding protein 42 (478 aa).

The span at 1-20 (MASAMAGAGPAPGLPVAGGP) shows a compositional bias: low complexity. Residues 1–33 (MASAMAGAGPAPGLPVAGGPVVPGPGVGIPGKS) form a disordered region. A2 bears the N-acetylalanine mark. S133 carries the post-translational modification Phosphoserine. Residues R151, R156, R166, and R179 each carry the asymmetric dimethylarginine modification. 2 disordered regions span residues 171-209 (LSSA…PPMA) and 317-354 (SLRP…PEKL). Residues 193–205 (PPLPGPPGPPMML) are compositionally biased toward pro residues. The tract at residues 234–478 (DLGLGLGLGL…QKEKKKLGLR (245 aa)) is necessary for interaction with HNRNPK. The span at 343–354 (GEDKKKGKPEKL) shows a compositional bias: basic and acidic residues. The region spanning 379-457 (FRIFCGDLGN…RPIKLRKSMW (79 aa)) is the RRM domain.

It belongs to the RRM RBM42 family. As to quaternary structure, interacts with HNRNPK.

The protein resides in the nucleus. The protein localises to the cytoplasm. Its function is as follows. Binds (via the RRM domain) to the 3' untranslated region (UTR) of p21 mRNA. The polypeptide is RNA-binding protein 42 (Rbm42) (Rattus norvegicus (Rat)).